The following is a 793-amino-acid chain: ATP-dependent RNA helicase DRS1 (793 aa).

The segment at 1–208 (MADDFITTID…TTTDPTLPSS (208 aa)) is disordered. Positions 75–89 (KRGKPIRAFKDRKRK) are enriched in basic residues. Acidic residues-rich tracts occupy residues 94–114 (ATSE…NDDS), 122–144 (SEED…ENEI), and 152–184 (ESDE…EETA). The span at 193 to 208 (FFSSDPTTTDPTLPSS) shows a compositional bias: low complexity. The Q motif motif lies at 207-235 (SSFTAMNLSRPLLRALTSLQFTAPTPIQA). The Helicase ATP-binding domain occupies 238–416 (IPLALLGRDI…KLSLDKPIRV (179 aa)). Residue 251–258 (AVTGSGKT) coordinates ATP. The DEAD box signature appears at 364-367 (DEAD). The Helicase C-terminal domain maps to 427-606 (GLTQEFVRIR…EFKDDIQEIL (180 aa)). The stretch at 560 to 630 (EADRKMLKAA…EIKKGQNMVE (71 aa)) forms a coiled coil. The interval 645 to 793 (QSGKEKQASK…KKGGKGKGRK (149 aa)) is disordered. Basic and acidic residues-rich tracts occupy residues 671-688 (SAEK…DGLS) and 726-740 (KITE…AGKG). Residues 741-752 (KDKKKGKARRVT) show a composition bias toward basic residues. Positions 761–771 (SEGKKSHEGMR) are enriched in basic and acidic residues. Residues 782-793 (GKKKGGKGKGRK) show a composition bias toward basic residues.

It belongs to the DEAD box helicase family. DDX27/DRS1 subfamily. Associates with pre-ribosomal particles.

The protein localises to the nucleus. Its subcellular location is the nucleolus. It catalyses the reaction ATP + H2O = ADP + phosphate + H(+). ATP-binding RNA helicase involved in ribosome assembly. In Cryptococcus neoformans var. neoformans serotype D (strain JEC21 / ATCC MYA-565) (Filobasidiella neoformans), this protein is ATP-dependent RNA helicase DRS1 (DRS1).